A 296-amino-acid chain; its full sequence is 4-hydroxy-tetrahydrodipicolinate synthase (296 aa).

Residue threonine 47 participates in pyruvate binding. The active-site Proton donor/acceptor is the tyrosine 135. Catalysis depends on lysine 163, which acts as the Schiff-base intermediate with substrate. Residue isoleucine 205 participates in pyruvate binding.

The protein belongs to the DapA family. Homotetramer; dimer of dimers.

It is found in the cytoplasm. The enzyme catalyses L-aspartate 4-semialdehyde + pyruvate = (2S,4S)-4-hydroxy-2,3,4,5-tetrahydrodipicolinate + H2O + H(+). The protein operates within amino-acid biosynthesis; L-lysine biosynthesis via DAP pathway; (S)-tetrahydrodipicolinate from L-aspartate: step 3/4. Functionally, catalyzes the condensation of (S)-aspartate-beta-semialdehyde [(S)-ASA] and pyruvate to 4-hydroxy-tetrahydrodipicolinate (HTPA). The sequence is that of 4-hydroxy-tetrahydrodipicolinate synthase from Macrococcus caseolyticus (strain JCSC5402) (Macrococcoides caseolyticum).